The sequence spans 276 residues: NADPH-dependent 7-cyano-7-deazaguanine reductase (276 aa).

83-85 is a binding site for substrate; sequence IES. 85–86 is a binding site for NADPH; it reads SK. Cys184 acts as the Thioimide intermediate in catalysis. Asp191 (proton donor) is an active-site residue. 223-224 provides a ligand contact to substrate; the sequence is HE. Residue 252–253 coordinates NADPH; it reads RG.

This sequence belongs to the GTP cyclohydrolase I family. QueF type 2 subfamily. In terms of assembly, homodimer.

The protein resides in the cytoplasm. The enzyme catalyses 7-aminomethyl-7-carbaguanine + 2 NADP(+) = 7-cyano-7-deazaguanine + 2 NADPH + 3 H(+). It participates in tRNA modification; tRNA-queuosine biosynthesis. Functionally, catalyzes the NADPH-dependent reduction of 7-cyano-7-deazaguanine (preQ0) to 7-aminomethyl-7-deazaguanine (preQ1). The polypeptide is NADPH-dependent 7-cyano-7-deazaguanine reductase (Pseudomonas aeruginosa (strain LESB58)).